The primary structure comprises 194 residues: Protein LURP-one-related 10 (194 aa).

Belongs to the LOR family.

Might be related to the phospholipid scramblase and tubby-like superfamily of membrane tethered transcription factors. In Arabidopsis thaliana (Mouse-ear cress), this protein is Protein LURP-one-related 10.